We begin with the raw amino-acid sequence, 447 residues long: Argininosuccinate synthase (447 aa).

ATP is bound by residues 17–25 and Ala-43; that span reads AFSGGLDTS. Tyr-99 provides a ligand contact to L-citrulline. 2 residues coordinate ATP: Gly-129 and Thr-131. L-aspartate contacts are provided by Thr-131, Asn-135, and Asp-136. Asn-135 provides a ligand contact to L-citrulline. Asp-136 provides a ligand contact to ATP. L-citrulline is bound by residues Arg-139 and Ser-192. ATP is bound at residue Asp-194. Residues Thr-201, Glu-203, and Glu-280 each contribute to the L-citrulline site.

The protein belongs to the argininosuccinate synthase family. Type 2 subfamily. In terms of assembly, homotetramer.

The protein localises to the cytoplasm. It catalyses the reaction L-citrulline + L-aspartate + ATP = 2-(N(omega)-L-arginino)succinate + AMP + diphosphate + H(+). Its pathway is amino-acid biosynthesis; L-arginine biosynthesis; L-arginine from L-ornithine and carbamoyl phosphate: step 2/3. The chain is Argininosuccinate synthase from Shigella dysenteriae serotype 1 (strain Sd197).